The chain runs to 1128 residues: Probable serine/threonine-protein kinase DDB_G0283337 (1128 aa).

The segment covering 1 to 17 has biased composition (low complexity); that stretch reads MENNNNNNINKTNTPNN. Disordered regions lie at residues 1–21, 60–100, 131–151, 236–256, and 375–504; these read MENN…SFSP, INHN…NNNN, RESN…NNSN, NNSK…SNSN, and NDNE…NSEQ. Low complexity-rich tracts occupy residues 243-256 and 375-502; these read NSSN…SNSN and NDNE…NNNS. The Protein kinase domain maps to 777–1054; that stretch reads LSDFSIIGEG…EIQKCKEEYE (278 aa). Residues 783–791 and Lys-809 contribute to the ATP site; that span reads IGEGGFSTV. Asp-904 functions as the Proton acceptor in the catalytic mechanism.

It belongs to the protein kinase superfamily. Ser/Thr protein kinase family.

The catalysed reaction is L-seryl-[protein] + ATP = O-phospho-L-seryl-[protein] + ADP + H(+). It carries out the reaction L-threonyl-[protein] + ATP = O-phospho-L-threonyl-[protein] + ADP + H(+). The protein is Probable serine/threonine-protein kinase DDB_G0283337 of Dictyostelium discoideum (Social amoeba).